A 132-amino-acid polypeptide reads, in one-letter code: Small ribosomal subunit protein uS13 (132 aa).

Basic residues predominate over residues 101 to 125 (RGLPVRGQRTKTNARTRKGPRKTVA). Residues 101–132 (RGLPVRGQRTKTNARTRKGPRKTVANKKIETR) form a disordered region.

It belongs to the universal ribosomal protein uS13 family. Part of the 30S ribosomal subunit. Forms a loose heterodimer with protein S19. Forms two bridges to the 50S subunit in the 70S ribosome.

Functionally, located at the top of the head of the 30S subunit, it contacts several helices of the 16S rRNA. In the 70S ribosome it contacts the 23S rRNA (bridge B1a) and protein L5 of the 50S subunit (bridge B1b), connecting the 2 subunits; these bridges are implicated in subunit movement. Contacts the tRNAs in the A and P-sites. In Ureaplasma parvum serovar 3 (strain ATCC 27815 / 27 / NCTC 11736), this protein is Small ribosomal subunit protein uS13.